Consider the following 217-residue polypeptide: Large ribosomal subunit protein uL3 (217 aa).

A disordered region spans residues 135–154; it reads ATHGNSLSHRAPGSIGQCQT. Gln-153 is subject to N5-methylglutamine.

This sequence belongs to the universal ribosomal protein uL3 family. As to quaternary structure, part of the 50S ribosomal subunit. Forms a cluster with proteins L14 and L19. Methylated by PrmB.

Its function is as follows. One of the primary rRNA binding proteins, it binds directly near the 3'-end of the 23S rRNA, where it nucleates assembly of the 50S subunit. The chain is Large ribosomal subunit protein uL3 from Coxiella burnetii (strain CbuG_Q212) (Coxiella burnetii (strain Q212)).